We begin with the raw amino-acid sequence, 329 residues long: Ribonucleoside-diphosphate reductase subunit beta (329 aa).

Fe cation contacts are provided by Asp66, Glu97, and His101. The active site involves Tyr105. Fe cation is bound by residues Glu164, Glu198, and His201.

This sequence belongs to the ribonucleoside diphosphate reductase small chain family. In terms of assembly, tetramer of two alpha and two beta subunits. The cofactor is Fe cation.

It carries out the reaction a 2'-deoxyribonucleoside 5'-diphosphate + [thioredoxin]-disulfide + H2O = a ribonucleoside 5'-diphosphate + [thioredoxin]-dithiol. Provides the precursors necessary for DNA synthesis. Catalyzes the biosynthesis of deoxyribonucleotides from the corresponding ribonucleotides. The chain is Ribonucleoside-diphosphate reductase subunit beta (bnrdF) from Bacillus pumilus (Bacillus mesentericus).